The sequence spans 505 residues: Glycerol kinase (505 aa).

Position 14 (T14) interacts with ADP. 3 residues coordinate ATP: T14, T15, and S16. T14 contacts sn-glycerol 3-phosphate. ADP is bound at residue R18. The sn-glycerol 3-phosphate site is built by R84, E85, Y136, and D246. Positions 84, 85, 136, 246, and 247 each coordinate glycerol. Residues T268 and G311 each coordinate ADP. T268, G311, Q315, and G412 together coordinate ATP. ADP is bound by residues G412 and N416.

The protein belongs to the FGGY kinase family.

It carries out the reaction glycerol + ATP = sn-glycerol 3-phosphate + ADP + H(+). It participates in polyol metabolism; glycerol degradation via glycerol kinase pathway; sn-glycerol 3-phosphate from glycerol: step 1/1. Inhibited by fructose 1,6-bisphosphate (FBP). In terms of biological role, key enzyme in the regulation of glycerol uptake and metabolism. Catalyzes the phosphorylation of glycerol to yield sn-glycerol 3-phosphate. The protein is Glycerol kinase of Vibrio parahaemolyticus serotype O3:K6 (strain RIMD 2210633).